Here is a 479-residue protein sequence, read N- to C-terminus: Ribosomal RNA small subunit methyltransferase F (479 aa).

S-adenosyl-L-methionine is bound by residues 125–131 (AAAPGSK), glutamate 149, aspartate 176, and aspartate 194. Catalysis depends on cysteine 247, which acts as the Nucleophile.

The protein belongs to the class I-like SAM-binding methyltransferase superfamily. RsmB/NOP family.

The protein resides in the cytoplasm. It carries out the reaction cytidine(1407) in 16S rRNA + S-adenosyl-L-methionine = 5-methylcytidine(1407) in 16S rRNA + S-adenosyl-L-homocysteine + H(+). In terms of biological role, specifically methylates the cytosine at position 1407 (m5C1407) of 16S rRNA. The sequence is that of Ribosomal RNA small subunit methyltransferase F from Escherichia coli (strain ATCC 8739 / DSM 1576 / NBRC 3972 / NCIMB 8545 / WDCM 00012 / Crooks).